A 644-amino-acid polypeptide reads, in one-letter code: Heat shock protein SSC3, mitochondrial (644 aa).

The protein belongs to the heat shock protein 70 family.

It localises to the mitochondrion matrix. Its subcellular location is the mitochondrion nucleoid. Its function is as follows. Plays a role in facilitating the assembly of some protein complexes inside the mitochondria. It may initiate the events that lead to refolding of imported precursors in the matrix space. The polypeptide is Heat shock protein SSC3, mitochondrial (ECM10) (Saccharomyces cerevisiae (strain ATCC 204508 / S288c) (Baker's yeast)).